The chain runs to 262 residues: Glutamate racemase (262 aa).

Substrate-binding positions include 9 to 10 (DS) and 41 to 42 (YG). The active-site Proton donor/acceptor is Cys-73. 74–75 (NT) serves as a coordination point for substrate. The active-site Proton donor/acceptor is the Cys-180. 181–182 (TH) contributes to the substrate binding site.

The protein belongs to the aspartate/glutamate racemases family.

It catalyses the reaction L-glutamate = D-glutamate. It participates in cell wall biogenesis; peptidoglycan biosynthesis. Provides the (R)-glutamate required for cell wall biosynthesis. This chain is Glutamate racemase, found in Aliivibrio fischeri (strain ATCC 700601 / ES114) (Vibrio fischeri).